We begin with the raw amino-acid sequence, 87 residues long: U14-lycotoxin-Ls1a (87 aa).

An N-terminal signal peptide occupies residues 1–20 (MNSKVFAALLLLALSTCVLS). The 46-residue stretch at 21 to 66 (EKYCPTPRNTSCKKMNIRNNCCRDSDCTSNAFCCAEPCGNFCHKAS) folds into the WAP domain. 5 disulfides stabilise this stretch: C24-C54, C32-C58, C41-C53, C42-C80, and C47-C62.

The protein belongs to the venom protein 11 family. 01 (wap-1) subfamily. Contains 5 disulfide bonds. Expressed by the venom gland.

Its subcellular location is the secreted. Functionally, has antibacterial activity. This Lycosa singoriensis (Wolf spider) protein is U14-lycotoxin-Ls1a.